A 286-amino-acid chain; its full sequence is Protein METABOLIC NETWORK MODULATOR 1 (286 aa).

Positions 1 to 10 are enriched in basic and acidic residues; the sequence is MEKESHEENN. Disordered regions lie at residues 1–60, 123–146, and 181–204; these read MEKE…DDEA, VMHH…GSGV, and GGER…SGAS. Over residues 20 to 29 the composition is skewed to basic residues; sequence KRKRGRPRKQ. Positions 30 to 39 are enriched in basic and acidic residues; it reads LKLESNEHSL. Over residues 131–140 the composition is skewed to basic residues; that stretch reads KRGRKSRFRE. A compositionally biased stretch (polar residues) spans 191-204; sequence PMQTETGSQASGAS.

Mailny observed in young seedlings and in emerging leaves.

Functionally, lineage-specific modulator of primary metabolism. Influences flowering time. This chain is Protein METABOLIC NETWORK MODULATOR 1, found in Arabidopsis thaliana (Mouse-ear cress).